Reading from the N-terminus, the 264-residue chain is Glycosylphosphatidylinositol anchor biosynthesis protein 11 (264 aa).

Residues 1–45 form a disordered region; it reads MPLVDPVTMSTPSTPAKAMGKSLPNTVKDPSPPPKAGSHTRSPVE. Helical transmembrane passes span 49–69, 83–103, 132–152, 160–180, 202–222, and 233–253; these read NSYYIAASIPALQLQIFVLLW, LILPVMALIQVFYAVVLLPVA, LLSLLLTLIATPPIHALMVLF, APHTFLCALNLSLLTLFPLFY, SVGGLVGACFGAWLGAVPIPL, and VTVLTGIYVGYAIGSYGGRTL.

It belongs to the PIGF family.

It is found in the endoplasmic reticulum membrane. Its pathway is glycolipid biosynthesis; glycosylphosphatidylinositol-anchor biosynthesis. Functionally, acts in the GPI biosynthetic pathway between GlcNAc-PI synthesis and GPI transfer to protein. The polypeptide is Glycosylphosphatidylinositol anchor biosynthesis protein 11 (GPI11) (Pyricularia oryzae (strain 70-15 / ATCC MYA-4617 / FGSC 8958) (Rice blast fungus)).